Consider the following 546-residue polypeptide: Inosine-5'-monophosphate dehydrogenase (546 aa).

2 consecutive CBS domains span residues 135–197 (FILD…VTAI) and 198–254 (MSTD…PLAS). NAD(+) is bound by residues 292 to 294 (DSS) and 342 to 344 (GMG). Positions 344 and 346 each coordinate K(+). IMP is bound at residue Ser-347. Residue Cys-349 participates in K(+) binding. Cys-349 acts as the Thioimidate intermediate in catalysis. IMP is bound by residues 382 to 384 (DGG), 405 to 406 (GG), and 430 to 434 (YRGMG). The active-site Proton acceptor is Arg-460. IMP is bound at residue Gln-472. Positions 531 and 532 each coordinate K(+).

The protein belongs to the IMPDH/GMPR family. In terms of assembly, homotetramer. K(+) serves as cofactor.

It is found in the cytoplasm. The catalysed reaction is IMP + NAD(+) + H2O = XMP + NADH + H(+). It functions in the pathway purine metabolism; XMP biosynthesis via de novo pathway; XMP from IMP: step 1/1. Mycophenolic acid (MPA) is a non-competitive inhibitor that prevents formation of the closed enzyme conformation by binding to the same site as the amobile flap. In contrast, mizoribine monophosphate (MZP) is a competitive inhibitor that induces the closed conformation. MPA is a potent inhibitor of mammalian IMPDHs but a poor inhibitor of the bacterial enzymes. MZP is a more potent inhibitor of bacterial IMPDH. Its function is as follows. Catalyzes the conversion of inosine 5'-phosphate (IMP) to xanthosine 5'-phosphate (XMP), the first committed and rate-limiting step in the de novo synthesis of guanine nucleotides, and therefore plays an important role in the regulation of cell growth. The sequence is that of Inosine-5'-monophosphate dehydrogenase from Aspergillus fumigatus (strain ATCC MYA-4609 / CBS 101355 / FGSC A1100 / Af293) (Neosartorya fumigata).